Here is a 274-residue protein sequence, read N- to C-terminus: Ubiquinone biosynthesis protein COQ4 homolog, mitochondrial (274 aa).

Residues 1 to 20 constitute a mitochondrion transit peptide; sequence MLRQTAFRSMKLNRTPGRYF. Residues 13 to 40 are disordered; sequence NRTPGRYFTTAENMDTGSSQSPPDTEQK. Over residues 22–36 the composition is skewed to polar residues; the sequence is TAENMDTGSSQSPPD. Zn(2+) is bound by residues His-177, Asp-178, His-181, and Glu-193.

This sequence belongs to the COQ4 family. As to quaternary structure, component of a multi-subunit COQ enzyme complex. Requires Zn(2+) as cofactor.

Its subcellular location is the mitochondrion inner membrane. It catalyses the reaction a 4-hydroxy-3-methoxy-5-(all-trans-polyprenyl)benzoate + H(+) = a 2-methoxy-6-(all-trans-polyprenyl)phenol + CO2. It participates in cofactor biosynthesis; ubiquinone biosynthesis. Functionally, lyase that catalyzes the C1-decarboxylation of 4-hydroxy-3-methoxy-5-(all-trans-polyprenyl)benzoic acid into 2-methoxy-6-(all-trans-polyprenyl)phenol during ubiquinone biosynthesis. This is Ubiquinone biosynthesis protein COQ4 homolog, mitochondrial from Aedes aegypti (Yellowfever mosquito).